The sequence spans 330 residues: tRNA U34 carboxymethyltransferase (330 aa).

Residues Lys-91, Trp-105, Lys-110, Gly-130, 152–154 (DPS), 181–182 (IE), Met-196, Tyr-200, and Arg-315 each bind carboxy-S-adenosyl-L-methionine.

This sequence belongs to the class I-like SAM-binding methyltransferase superfamily. CmoB family. In terms of assembly, homotetramer.

The catalysed reaction is carboxy-S-adenosyl-L-methionine + 5-hydroxyuridine(34) in tRNA = 5-carboxymethoxyuridine(34) in tRNA + S-adenosyl-L-homocysteine + H(+). Functionally, catalyzes carboxymethyl transfer from carboxy-S-adenosyl-L-methionine (Cx-SAM) to 5-hydroxyuridine (ho5U) to form 5-carboxymethoxyuridine (cmo5U) at position 34 in tRNAs. This is tRNA U34 carboxymethyltransferase from Shewanella sediminis (strain HAW-EB3).